The primary structure comprises 335 residues: L-carnitine dehydrogenase (335 aa).

29-34 (GTGVIG) is a binding site for NAD(+).

The protein belongs to the 3-hydroxyacyl-CoA dehydrogenase family. L-carnitine dehydrogenase subfamily. In terms of assembly, homodimer.

The protein localises to the cytoplasm. It carries out the reaction carnitine + NAD(+) = 3-dehydrocarnitine + NADH + H(+). The protein operates within amine and polyamine metabolism; carnitine metabolism. Its function is as follows. Catalyzes the NAD(+)-dependent oxidation of L-carnitine to 3-dehydrocarnitine. The polypeptide is L-carnitine dehydrogenase (Streptomyces griseus subsp. griseus (strain JCM 4626 / CBS 651.72 / NBRC 13350 / KCC S-0626 / ISP 5235)).